The primary structure comprises 221 residues: Thiopurine S-methyltransferase (221 aa).

S-adenosyl-L-methionine contacts are provided by Trp-12, Leu-47, Glu-68, and Arg-125.

Belongs to the class I-like SAM-binding methyltransferase superfamily. TPMT family.

Its subcellular location is the cytoplasm. It carries out the reaction S-adenosyl-L-methionine + a thiopurine = S-adenosyl-L-homocysteine + a thiopurine S-methylether.. The sequence is that of Thiopurine S-methyltransferase from Legionella pneumophila (strain Corby).